Here is a 263-residue protein sequence, read N- to C-terminus: MPEGPEIRRAADNLEAAIKGKPLTDVWFAFPQLKSYQSRLIGQHVTHVETRGKALLTHFSNDLTLYSHNQLYGVWRVVDTGEEPQTTRVLRVKLQTADKTILLYSASDIEMLTPEQLTTHPFLQRVGPDVLDPNLTPEVVKERLLSPRFRNRQFAGLLLDQAFLAGLGNYLRVEILWQVGLTGNHKAKDLNAAQLDALAHALLDIPRLSYATRGQVDENKYHGALFRFKVFHRDGEPCERCGGIIEKTTLSSRPFYWCPGCQH.

Residue Pro-2 is the Schiff-base intermediate with DNA of the active site. The active-site Proton donor is the Glu-3. The active-site Proton donor; for beta-elimination activity is Lys-53. Residues Gln-70, Arg-125, and Asn-169 each coordinate DNA. An FPG-type zinc finger spans residues 229–263 (KVFHRDGEPCERCGGIIEKTTLSSRPFYWCPGCQH). Catalysis depends on Arg-253, which acts as the Proton donor; for delta-elimination activity.

Belongs to the FPG family. The cofactor is Zn(2+).

It carries out the reaction 2'-deoxyribonucleotide-(2'-deoxyribose 5'-phosphate)-2'-deoxyribonucleotide-DNA = a 3'-end 2'-deoxyribonucleotide-(2,3-dehydro-2,3-deoxyribose 5'-phosphate)-DNA + a 5'-end 5'-phospho-2'-deoxyribonucleoside-DNA + H(+). Its function is as follows. Involved in base excision repair of DNA damaged by oxidation or by mutagenic agents. Acts as a DNA glycosylase that recognizes and removes damaged bases. Has a preference for oxidized pyrimidines, such as thymine glycol, 5,6-dihydrouracil and 5,6-dihydrothymine. Has AP (apurinic/apyrimidinic) lyase activity and introduces nicks in the DNA strand. Cleaves the DNA backbone by beta-delta elimination to generate a single-strand break at the site of the removed base with both 3'- and 5'-phosphates. This Escherichia coli O6:K15:H31 (strain 536 / UPEC) protein is Endonuclease 8.